The chain runs to 192 residues: Elongation factor P (192 aa).

K38 bears the N6-(3,6-diaminohexanoyl)-5-hydroxylysine mark.

It belongs to the elongation factor P family. Post-translationally, may be beta-lysylated on the epsilon-amino group of Lys-38 by the combined action of EpmA and EpmB, and then hydroxylated on the C5 position of the same residue by EpmC (if this protein is present). Lysylation is critical for the stimulatory effect of EF-P on peptide-bond formation. The lysylation moiety may extend toward the peptidyltransferase center and stabilize the terminal 3-CCA end of the tRNA. Hydroxylation of the C5 position on Lys-38 may allow additional potential stabilizing hydrogen-bond interactions with the P-tRNA.

The protein resides in the cytoplasm. Its pathway is protein biosynthesis; polypeptide chain elongation. Functionally, involved in peptide bond synthesis. Alleviates ribosome stalling that occurs when 3 or more consecutive Pro residues or the sequence PPG is present in a protein, possibly by augmenting the peptidyl transferase activity of the ribosome. Modification of Lys-38 is required for alleviation. The chain is Elongation factor P from Mannheimia succiniciproducens (strain KCTC 0769BP / MBEL55E).